A 124-amino-acid chain; its full sequence is Trophoblast-specific protein alpha (124 aa).

The N-terminal stretch at 1 to 18 is a signal peptide; the sequence is MTPTIFLVILCLGVASAV. Disordered stretches follow at residues 51-74 and 91-124; these read KLHS…SGQL and FEEE…NQPQ. Residues 62–74 are compositionally biased toward polar residues; sequence EGSNIEMSASGQL. The span at 103–112 shows a compositional bias: acidic residues; that stretch reads DDPEFEDYTE.

It localises to the secreted. The protein resides in the extracellular space. It may be a growth factor/hormone, perhaps involved in interaction between the maternal and fetal systems in maintenance of pregnancy. The polypeptide is Trophoblast-specific protein alpha (Tpbpa) (Mus musculus (Mouse)).